We begin with the raw amino-acid sequence, 135 residues long: Large ribosomal subunit protein bL17 (135 aa).

This sequence belongs to the bacterial ribosomal protein bL17 family. As to quaternary structure, part of the 50S ribosomal subunit. Contacts protein L32.

This Listeria innocua serovar 6a (strain ATCC BAA-680 / CLIP 11262) protein is Large ribosomal subunit protein bL17.